The following is a 294-amino-acid chain: GTPase Era (294 aa).

An Era-type G domain is found at 2 to 171; the sequence is NSGVVTIIGR…LSLLIELLPE (170 aa). The segment at 10–17 is G1; it reads GRPSAGKS. 10-17 provides a ligand contact to GTP; the sequence is GRPSAGKS. Positions 36–40 are G2; it reads QTTRN. The segment at 57–60 is G3; sequence DTPG. GTP-binding positions include 57 to 61 and 119 to 122; these read DTPGY and NKAD. Residues 119–122 form a G4 region; that stretch reads NKAD. A G5 region spans residues 150-152; it reads ISA. A KH type-2 domain is found at 202-280; that stretch reads TREEIPHALY…QLDLQVRVNK (79 aa).

This sequence belongs to the TRAFAC class TrmE-Era-EngA-EngB-Septin-like GTPase superfamily. Era GTPase family. In terms of assembly, monomer.

It is found in the cytoplasm. Its subcellular location is the cell inner membrane. In terms of biological role, an essential GTPase that binds both GDP and GTP, with rapid nucleotide exchange. Plays a role in 16S rRNA processing and 30S ribosomal subunit biogenesis and possibly also in cell cycle regulation and energy metabolism. The chain is GTPase Era from Treponema denticola (strain ATCC 35405 / DSM 14222 / CIP 103919 / JCM 8153 / KCTC 15104).